Here is a 63-residue protein sequence, read N- to C-terminus: UPF0370 protein PC1_1167 (63 aa).

A helical transmembrane segment spans residues 3–23 (WLADYWWIILIILIGMLINGI). The tract at residues 37–63 (NKPKLPPHRDNNDKWDDEDDDWPKKKP) is disordered.

This sequence belongs to the UPF0370 family.

It localises to the cell membrane. The sequence is that of UPF0370 protein PC1_1167 from Pectobacterium carotovorum subsp. carotovorum (strain PC1).